A 706-amino-acid chain; its full sequence is Elongation factor G (706 aa).

A tr-type G domain is found at 8-295; it reads ERYRNFGIMA…AVIDYLPSPL (288 aa). GTP is bound by residues 17–24, 92–96, and 146–149; these read AHIDAGKT, DTPGH, and NKMD.

Belongs to the TRAFAC class translation factor GTPase superfamily. Classic translation factor GTPase family. EF-G/EF-2 subfamily.

It is found in the cytoplasm. Functionally, catalyzes the GTP-dependent ribosomal translocation step during translation elongation. During this step, the ribosome changes from the pre-translocational (PRE) to the post-translocational (POST) state as the newly formed A-site-bound peptidyl-tRNA and P-site-bound deacylated tRNA move to the P and E sites, respectively. Catalyzes the coordinated movement of the two tRNA molecules, the mRNA and conformational changes in the ribosome. The chain is Elongation factor G from Jannaschia sp. (strain CCS1).